The following is a 175-amino-acid chain: ATP synthase subunit d, mitochondrial (175 aa).

N-acetylserine is present on S2.

F-type ATP synthases have 2 components, the catalytic core F(1) and the membrane-embedded component F(0), linked together by a central stalk and a peripheral stalk. The central stalk, also called rotor shaft, is often seen as part of F(1). The peripheral stalk is seen as part of F(0). F(0) contains the membrane channel next to the rotor. F-type ATP synthases form dimers but each monomer functions independently in ATP generation. The dimer consists of 18 different polypeptides: ATP1 (subunit alpha, part of F(1), 3 molecules per monomer), ATP2 (subunit beta, part of F(1), 3 molecules per monomer), ATP3 (subunit gamma, part of the central stalk), ATP4 (subunit b, part of the peripheral stalk), ATP5/OSCP (subunit 5/OSCP, part of the peripheral stalk), ATP6 (subunit a, part of the peripheral stalk), ATP7 (subunit d, part of the peripheral stalk), ATP8 (subunit 8, part of the peripheral stalk), OLI1 (subunit c, part of the rotor, 10 molecules per monomer), ATP14 (subunit h, part of the peripheral stalk), ATP15 (subunit epsilon, part of the central stalk), ATP16 (subunit delta, part of the central stalk), ATP17 (subunit f, part of the peripheral stalk), ATP18 (subunit i/j, part of the peripheral stalk). Dimer-specific subunits are ATP19 (subunit k, at interface between monomers), ATP20 (subunit g, at interface between monomers), TIM11 (subunit e, at interface between monomers). Also contains subunit L.

The protein localises to the mitochondrion inner membrane. Mitochondrial membrane ATP synthase (F(1)F(0) ATP synthase or Complex V) produces ATP from ADP in the presence of a proton gradient across the membrane which is generated by electron transport complexes of the respiratory chain. F-type ATP synthases consist of two structural domains, F(1) - containing the extramembraneous catalytic core, and F(0) - containing the membrane proton channel, linked together by a central stalk and a peripheral stalk. During catalysis, ATP synthesis in the catalytic domain of F(1) is coupled via a rotary mechanism of the central stalk subunits to proton translocation. Part of the complex F(0) domain and the peripheral stalk, which acts as a stator to hold the catalytic alpha/ATP1(3)beta/ATP2(3) subcomplex and subunit a/ATP6 static relative to the rotary elements. The sequence is that of ATP synthase subunit d, mitochondrial from Pichia angusta (Yeast).